Consider the following 180-residue polypeptide: N-terminal acetyltransferase B complex catalytic subunit naa20 (180 aa).

The N-acetyltransferase domain occupies 2-156 (TDTRKFKATD…DSFDMRKPLS (155 aa)).

The protein belongs to the acetyltransferase family. As to quaternary structure, component of the N-terminal acetyltransferase B (NatB) complex.

It localises to the cytoplasm. Its subcellular location is the nucleus. It carries out the reaction N-terminal L-methionyl-L-asparaginyl-[protein] + acetyl-CoA = N-terminal N(alpha)-acetyl-L-methionyl-L-asparaginyl-[protein] + CoA + H(+). The enzyme catalyses N-terminal L-methionyl-L-glutaminyl-[protein] + acetyl-CoA = N-terminal N(alpha)-acetyl-L-methionyl-L-glutaminyl-[protein] + CoA + H(+). The catalysed reaction is N-terminal L-methionyl-L-aspartyl-[protein] + acetyl-CoA = N-terminal N(alpha)-acetyl-L-methionyl-L-aspartyl-[protein] + CoA + H(+). It catalyses the reaction N-terminal L-methionyl-L-glutamyl-[protein] + acetyl-CoA = N-terminal N(alpha)-acetyl-L-methionyl-L-glutamyl-[protein] + CoA + H(+). Its function is as follows. Catalytic subunit of the NatB N-terminal acetyltransferase, which catalyzes acetylation of the amino-terminal methionine residues of all proteins beginning with Met-Asp or Met-Glu and of some proteins beginning with Met-Asn, Met-Gln or Met-Met. The protein is N-terminal acetyltransferase B complex catalytic subunit naa20 (naa20) of Schizosaccharomyces pombe (strain 972 / ATCC 24843) (Fission yeast).